Consider the following 310-residue polypeptide: Malate dehydrogenase (310 aa).

Residues 7-12 (GAGNVG) and Asp-32 contribute to the NAD(+) site. Arg-81 and Arg-87 together coordinate substrate. NAD(+) contacts are provided by residues Asn-94 and 117-119 (VSN). Asn-119 and Arg-150 together coordinate substrate. His-174 serves as the catalytic Proton acceptor.

This sequence belongs to the LDH/MDH superfamily. MDH type 3 family.

The enzyme catalyses (S)-malate + NAD(+) = oxaloacetate + NADH + H(+). Functionally, catalyzes the reversible oxidation of malate to oxaloacetate. This is Malate dehydrogenase from Chloroherpeton thalassium (strain ATCC 35110 / GB-78).